Consider the following 286-residue polypeptide: DNA-directed RNA polymerase subunit Rpo3 (286 aa).

Belongs to the archaeal Rpo3/eukaryotic RPB3 RNA polymerase subunit family. As to quaternary structure, part of the RNA polymerase complex.

The protein localises to the cytoplasm. The enzyme catalyses RNA(n) + a ribonucleoside 5'-triphosphate = RNA(n+1) + diphosphate. DNA-dependent RNA polymerase (RNAP) catalyzes the transcription of DNA into RNA using the four ribonucleoside triphosphates as substrates. This chain is DNA-directed RNA polymerase subunit Rpo3, found in Aeropyrum pernix (strain ATCC 700893 / DSM 11879 / JCM 9820 / NBRC 100138 / K1).